Consider the following 1241-residue polypeptide: MRAVLTWRDKAEHCINDIAFKPDGTQLILAAGSRLLVYDTSDGTLLQPLKGHKDTVYCVAYAKDGKRFASGSADKSVIIWTSKLEGILKYTHNDAIQCVSYNPITHQLASCSSSDFGLWSPEQKSVSKHKSSSKIICCSWTNDGQYLALGMFNGIISIRNKNGEEKVKIERPGGSLSPIWSICWNPSSRWESFWMNRENEDAEDVIVNRYIQEIPSTLKSAVYSSQGSEAEEEEPEEEDDSPRDDNLEERNDILAVADWGQKVSFYQLSGKQIGKDRALNFDPCCISYFTKGEYILLGGSDKQVSLFTKDGVRLGTVGEQNSWVWTCQAKPDSNYVVVGCQDGTISFYQLIFSTVHGLYKDRYAYRDSMTDVIVQHLITEQKVRIKCKELVKKIAIYRNRLAIQLPEKILIYELYSEDLSDMHYRVKEKIIKKFECNLLVVCANHIILCQEKRLQCLSFSGVKEREWQMESLIRYIKVIGGPPGREGLLVGLKNGQILKIFVDNLFAIVLLKQATAVRCLDMSASRKKLAVVDENDTCLVYDIDTKELLFQEPNANSVAWNTQCEDMLCFSGGGYLNIKASTFPVHRQKLQGFVVGYNGSKIFCLHVFSISAVEVPQSAPMYQYLDRKLFKEAYQIACLGVTDTDWRELAMEALEGLDFETAKKAFIRVQDLRYLELISSIEERKKRGETNNDLFLADVFSYQGKFHEAAKLYKRSGHENLALEMYTDLCMFEYAKDFLGSGDPKETKMLITKQADWARNIKEPKAAVEMYISAGEHVKAIEICGDHGWVDMLIDIARKLDKAEREPLLLCATYLKKLDSPGYAAETYLKMGDLKSLVQLHVETQRWDEAFALGEKHPEFKDDIYMPYAQWLAENDRFEEAQKAFHKAGRQREAVQVLEQLTNNAVAESRFNDAAYYYWMLSMQCLDIAQDPAQKDTMLGKFYHFQRLAELYHGYHAIHRHTEDPFSVHRPETLFNISRFLLHSLPKDTPSGISKVKILFTLAKQSKALGAYRLARHAYDKLRGLYIPARFQKSIELGTLTIRAKPFHDSEELVPLCYRCSTNNPLLNNLGNVCINCRQPFIFSASSYDVLHLVEFYLEEGITDEEAISLIDLEVLRPKRDDRQLEIANNSSQILRLVETKDSIGDEDPFTAKLSFEQGGSEFVPVVVSRLVLRSMSRRDVLIKRWPPPLRWQYFRSLLPDASITMCPSCFQMFHSEDYELLVLQHGCCPYCRRCKDDPGP.

WD repeat units lie at residues 10–50 (KAEH…QPLK), 51–91 (GHKD…LKYT), 93–129 (NDAIQCVSYNPITHQLASCSSSDFGLWSPEQKSVSKH), and 131–169 (SSSKIICCSWTNDGQYLALGMFNGIISIRNKNGEEKVKI). Residues 222 to 246 (VYSSQGSEAEEEEPEEEDDSPRDDN) form a disordered region. Acidic residues predominate over residues 229-242 (EAEEEEPEEEDDSP). 3 WD repeats span residues 278-317 (ALNFDPCCISYFTKGEYILLGGSDKQVSLFTKDGVRLGTV), 319-359 (EQNS…HGLY), and 512-551 (KQATAVRCLDMSASRKKLAVVDENDTCLVYDIDTKELLFQ).

As to quaternary structure, component of the IFT complex A (IFT-A) complex. IFT-A complex is divided into a core subcomplex composed of IFT122:IFT140:WDR19 which is associated with TULP3 and a peripheral subcomplex composed of IFT43:WDR35:TTC21B. Interacts with IFT43:WDR35; the interaction connects the 2 IFT-A subcomplexes. Interacts with IFTAP; the interaction associates IFTAP with IFT-A complex. Expressed in many tissues. Predominant expression in testis and pituitary.

It is found in the cell projection. The protein localises to the cilium. It localises to the cytoplasm. Its subcellular location is the cytoskeleton. The protein resides in the cilium basal body. Its function is as follows. As a component of the IFT complex A (IFT-A), a complex required for retrograde ciliary transport and entry into cilia of G protein-coupled receptors (GPCRs), it is required in ciliogenesis and ciliary protein trafficking. Involved in cilia formation during neuronal patterning. Acts as a negative regulator of Shh signaling. Required to recruit TULP3 to primary cilia. The chain is Intraflagellar transport protein 122 homolog from Homo sapiens (Human).